We begin with the raw amino-acid sequence, 154 residues long: Ribosomal RNA large subunit methyltransferase H (154 aa).

Residues Leu70, Gly102, and 121–126 contribute to the S-adenosyl-L-methionine site; that span reads LSRMTL.

The protein belongs to the RNA methyltransferase RlmH family. In terms of assembly, homodimer.

It localises to the cytoplasm. It carries out the reaction pseudouridine(1915) in 23S rRNA + S-adenosyl-L-methionine = N(3)-methylpseudouridine(1915) in 23S rRNA + S-adenosyl-L-homocysteine + H(+). Its function is as follows. Specifically methylates the pseudouridine at position 1915 (m3Psi1915) in 23S rRNA. In Citrifermentans bemidjiense (strain ATCC BAA-1014 / DSM 16622 / JCM 12645 / Bem) (Geobacter bemidjiensis), this protein is Ribosomal RNA large subunit methyltransferase H.